We begin with the raw amino-acid sequence, 621 residues long: Complex I assembly factor ACAD9, mitochondrial (621 aa).

The N-terminal 37 residues, 1-37, are a transit peptide targeting the mitochondrion; sequence MSGCGLFLRTTAAARACRGLVVSTANRRLLRTSPPVR. Lysine 41 is subject to N6-acetyllysine. Lysine 92 is modified (N6-succinyllysine). Glutamate 426 acts as the Proton acceptor in catalysis. Phosphothreonine is present on threonine 478. Lysine 521 carries the N6-acetyllysine; alternate modification. The residue at position 521 (lysine 521) is an N6-succinyllysine; alternate.

This sequence belongs to the acyl-CoA dehydrogenase family. In terms of assembly, homodimer. Interacts with NDUFAF1 and ECSIT. Part of the mitochondrial complex I assembly/MCIA complex that comprises at least the core subunits TMEM126B, NDUFAF1, ECSIT and ACAD9 and complement subunits such as COA1 and TMEM186. Interacts with TMEM70 and TMEM242. It depends on FAD as a cofactor. In terms of tissue distribution, ubiquitously expressed in most normal human tissues and cancer cell lines with high level of expression in heart, skeletal muscles, brain, kidney and liver. In the cerebellum uniquely expressed in the granular layer (at protein level).

Its subcellular location is the mitochondrion inner membrane. The catalysed reaction is eicosanoyl-CoA + oxidized [electron-transfer flavoprotein] + H(+) = (2E)-eicosenoyl-CoA + reduced [electron-transfer flavoprotein]. It catalyses the reaction octadecanoyl-CoA + oxidized [electron-transfer flavoprotein] + H(+) = (2E)-octadecenoyl-CoA + reduced [electron-transfer flavoprotein]. It carries out the reaction oxidized [electron-transfer flavoprotein] + hexadecanoyl-CoA + H(+) = (2E)-hexadecenoyl-CoA + reduced [electron-transfer flavoprotein]. The enzyme catalyses decanoyl-CoA + oxidized [electron-transfer flavoprotein] + H(+) = (2E)-decenoyl-CoA + reduced [electron-transfer flavoprotein]. The catalysed reaction is nonanoyl-CoA + oxidized [electron-transfer flavoprotein] + H(+) = (2E)-nonenoyl-CoA + reduced [electron-transfer flavoprotein]. It catalyses the reaction pentadecanoyl-CoA + oxidized [electron-transfer flavoprotein] + H(+) = (2E)-pentadecenoyl-CoA + reduced [electron-transfer flavoprotein]. It carries out the reaction undecanoyl-CoA + oxidized [electron-transfer flavoprotein] + H(+) = trans-2-undecenoyl-CoA + reduced [electron-transfer flavoprotein]. The enzyme catalyses (9Z)-hexadecenoyl-CoA + oxidized [electron-transfer flavoprotein] + H(+) = (2E,9Z)-hexadecadienoyl-CoA + reduced [electron-transfer flavoprotein]. The catalysed reaction is heptadecanoyl-CoA + oxidized [electron-transfer flavoprotein] + H(+) = trans-2-heptadecenoyl-CoA + reduced [electron-transfer flavoprotein]. It catalyses the reaction (9E)-octadecenoyl-CoA + oxidized [electron-transfer flavoprotein] + H(+) = (2E,9E)-octadecadienoyl-CoA + reduced [electron-transfer flavoprotein]. It carries out the reaction oxidized [electron-transfer flavoprotein] + (9Z)-octadecenoyl-CoA + H(+) = (2E,9Z)-octadecadienoyl-CoA + reduced [electron-transfer flavoprotein]. The enzyme catalyses (9Z,12Z)-octadecadienoyl-CoA + oxidized [electron-transfer flavoprotein] + H(+) = (2E,9Z,12Z)-octadecatrienoyl-CoA + reduced [electron-transfer flavoprotein]. The catalysed reaction is (4Z,7Z,10Z,13Z,16Z,19Z)-docosahexaenoyl-CoA + oxidized [electron-transfer flavoprotein] + H(+) = (2E,4Z,7Z,10Z,13Z,16Z,19Z)-docosaheptaenoyl-CoA + reduced [electron-transfer flavoprotein]. It catalyses the reaction tetradecanoyl-CoA + oxidized [electron-transfer flavoprotein] + H(+) = (2E)-tetradecenoyl-CoA + reduced [electron-transfer flavoprotein]. As part of the MCIA complex, primarily participates in the assembly of the mitochondrial complex I and therefore plays a role in oxidative phosphorylation. This moonlighting protein also has a dehydrogenase activity toward a broad range of substrates with greater specificity for long-chain unsaturated acyl-CoAs. However, in vivo, it does not seem to play a primary role in fatty acid oxidation. In addition, the function in complex I assembly is independent of the dehydrogenase activity of the protein. The sequence is that of Complex I assembly factor ACAD9, mitochondrial from Homo sapiens (Human).